The sequence spans 365 residues: Aspartate-semialdehyde dehydrogenase (365 aa).

NADP(+)-binding residues include threonine 13, glycine 14, serine 15, valine 16, serine 38, serine 41, leucine 85, and aspartate 86. Phosphothreonine is present on threonine 13. Cysteine 156 (acyl-thioester intermediate) is an active-site residue. NADP(+) is bound at residue glycine 188. Residue histidine 256 is the Proton acceptor of the active site. A phosphoserine mark is found at serine 318 and serine 323. Asparagine 343 contributes to the NADP(+) binding site.

The protein belongs to the aspartate-semialdehyde dehydrogenase family. Homotetramer.

The protein resides in the cytoplasm. Its subcellular location is the cytosol. The protein localises to the nucleus. It carries out the reaction L-aspartate 4-semialdehyde + phosphate + NADP(+) = 4-phospho-L-aspartate + NADPH + H(+). It participates in amino-acid biosynthesis; L-methionine biosynthesis via de novo pathway; L-homoserine from L-aspartate: step 2/3. The protein operates within amino-acid biosynthesis; L-threonine biosynthesis; L-threonine from L-aspartate: step 2/5. In terms of biological role, catalyzes the NADPH-dependent formation of L-aspartate 4-semialdehyde (L-ASA) by the reductive dephosphorylation of 4-phospho-L-aspartate. Mediates the second step in the biosynthesis of amino acids that derive from aspartate (the aspartate family of amino acids), including methioinine and threonine, the latter of which is a precursor to isoleucine. This chain is Aspartate-semialdehyde dehydrogenase (HOM2), found in Saccharomyces cerevisiae (strain ATCC 204508 / S288c) (Baker's yeast).